The following is a 275-amino-acid chain: Apoptosis inhibitor 1 (275 aa).

BIR repeat units follow at residues leucine 24 to alanine 91 and proline 126 to valine 193. Zn(2+)-binding residues include cysteine 163, cysteine 166, histidine 183, and cysteine 190. An RING-type zinc finger spans residues cysteine 227 to arginine 263.

Functionally, acts by blocking cellular apoptosis rather than by preventing viral stimulation of apoptosis. The polypeptide is Apoptosis inhibitor 1 (IAP1) (Orgyia pseudotsugata (Douglas-fir tussock moth)).